A 302-amino-acid polypeptide reads, in one-letter code: Glycine--tRNA ligase alpha subunit (302 aa).

Belongs to the class-II aminoacyl-tRNA synthetase family. In terms of assembly, tetramer of two alpha and two beta subunits.

Its subcellular location is the cytoplasm. It carries out the reaction tRNA(Gly) + glycine + ATP = glycyl-tRNA(Gly) + AMP + diphosphate. The chain is Glycine--tRNA ligase alpha subunit from Haemophilus influenzae (strain 86-028NP).